A 96-amino-acid polypeptide reads, in one-letter code: Large ribosomal subunit protein bL27 (96 aa).

Residues 1–9 constitute a propeptide that is removed on maturation; it reads MLRLDLQFF. The disordered stretch occupies residues 14–36; the sequence is GVGSTKNGRDSQSKRLGAKRADG.

Belongs to the bacterial ribosomal protein bL27 family. Post-translationally, the N-terminus is cleaved by ribosomal processing cysteine protease Prp.

The polypeptide is Large ribosomal subunit protein bL27 (Bacillus anthracis (strain A0248)).